Here is a 96-residue protein sequence, read N- to C-terminus: Small ribosomal subunit protein bS20 (96 aa).

The protein belongs to the bacterial ribosomal protein bS20 family.

In terms of biological role, binds directly to 16S ribosomal RNA. This Anaplasma phagocytophilum (strain HZ) protein is Small ribosomal subunit protein bS20.